Reading from the N-terminus, the 300-residue chain is N-acetylmuramic acid 6-phosphate etherase 2 (300 aa).

An SIS domain is found at 57–220; that stretch reads ITAAFANGGR…TTGAMIRSGK (164 aa). The active-site Proton donor is the glutamate 85. Glutamate 116 is a catalytic residue.

The protein belongs to the GCKR-like family. MurNAc-6-P etherase subfamily. Homodimer.

The enzyme catalyses N-acetyl-D-muramate 6-phosphate + H2O = N-acetyl-D-glucosamine 6-phosphate + (R)-lactate. It participates in amino-sugar metabolism; 1,6-anhydro-N-acetylmuramate degradation. The protein operates within amino-sugar metabolism; N-acetylmuramate degradation. It functions in the pathway cell wall biogenesis; peptidoglycan recycling. Its function is as follows. Specifically catalyzes the cleavage of the D-lactyl ether substituent of MurNAc 6-phosphate, producing GlcNAc 6-phosphate and D-lactate. Together with AnmK, is also required for the utilization of anhydro-N-acetylmuramic acid (anhMurNAc) either imported from the medium or derived from its own cell wall murein, and thus plays a role in cell wall recycling. The sequence is that of N-acetylmuramic acid 6-phosphate etherase 2 from Vibrio parahaemolyticus serotype O3:K6 (strain RIMD 2210633).